The chain runs to 208 residues: ATP-dependent Clp protease proteolytic subunit (208 aa).

Ser-98 functions as the Nucleophile in the catalytic mechanism. His-123 is an active-site residue.

This sequence belongs to the peptidase S14 family. In terms of assembly, fourteen ClpP subunits assemble into 2 heptameric rings which stack back to back to give a disk-like structure with a central cavity, resembling the structure of eukaryotic proteasomes.

It localises to the cytoplasm. It catalyses the reaction Hydrolysis of proteins to small peptides in the presence of ATP and magnesium. alpha-casein is the usual test substrate. In the absence of ATP, only oligopeptides shorter than five residues are hydrolyzed (such as succinyl-Leu-Tyr-|-NHMec, and Leu-Tyr-Leu-|-Tyr-Trp, in which cleavage of the -Tyr-|-Leu- and -Tyr-|-Trp bonds also occurs).. Cleaves peptides in various proteins in a process that requires ATP hydrolysis. Has a chymotrypsin-like activity. Plays a major role in the degradation of misfolded proteins. The protein is ATP-dependent Clp protease proteolytic subunit of Wolbachia sp. subsp. Brugia malayi (strain TRS).